The chain runs to 220 residues: 5'(3')-deoxyribonucleotidase, mitochondrial (220 aa).

A mitochondrion-targeting transit peptide spans 1–23 (MHRLRGCCARPRGAPLRAERSRA). Catalysis depends on Asp33, which acts as the Nucleophile. Mg(2+) contacts are provided by Asp33 and Asp35. The Proton donor role is filled by Asp35. Residues Asp35, Phe41, Phe67, Trp68, Val69, Trp88, Thr122, and Lys157 each coordinate substrate. Position 168 (Asp168) interacts with Mg(2+).

Belongs to the 5'(3')-deoxyribonucleotidase family. As to quaternary structure, homodimer. It depends on Mg(2+) as a cofactor.

It is found in the mitochondrion. Functionally, dephosphorylates specifically the 5' and 2'(3')-phosphates of uracil and thymine deoxyribonucleotides, and so protects mitochondrial DNA replication from excess dTTP. Has only marginal activity towards dIMP and dGMP. This chain is 5'(3')-deoxyribonucleotidase, mitochondrial (Nt5m), found in Mus musculus (Mouse).